We begin with the raw amino-acid sequence, 257 residues long: Snake venom serine protease rhinocerase 4 (257 aa).

Positions 1-17 are cleaved as a signal peptide; sequence VLIRVLANLLVLQLSYA. Positions 18–23 are excised as a propeptide; the sequence is QKSSEL. The Peptidase S1 domain maps to 24–248; sequence VIGGAECNIN…YTDWIRSIIG (225 aa). Cystine bridges form between cysteine 30-cysteine 162, cysteine 49-cysteine 65, cysteine 97-cysteine 255, cysteine 141-cysteine 209, cysteine 173-cysteine 188, and cysteine 199-cysteine 224. Asparagine 43 carries an N-linked (GlcNAc...) asparagine glycan. The Charge relay system role is filled by histidine 64. N-linked (GlcNAc...) asparagine glycosylation is found at asparagine 78 and asparagine 100. Aspartate 109 acts as the Charge relay system in catalysis. Serine 203 acts as the Charge relay system in catalysis. Residue asparagine 250 is glycosylated (N-linked (GlcNAc...) asparagine).

The protein belongs to the peptidase S1 family. Snake venom subfamily. In terms of tissue distribution, expressed by the venom gland.

The protein localises to the secreted. Its function is as follows. Snake venom serine protease that may act in the hemostasis system of the prey. The polypeptide is Snake venom serine protease rhinocerase 4 (Bitis rhinoceros (West African gaboon viper)).